Reading from the N-terminus, the 153-residue chain is Large ribosomal subunit protein bL9 (153 aa).

This sequence belongs to the bacterial ribosomal protein bL9 family.

In terms of biological role, binds to the 23S rRNA. The chain is Large ribosomal subunit protein bL9 from Synechococcus sp. (strain JA-3-3Ab) (Cyanobacteria bacterium Yellowstone A-Prime).